The primary structure comprises 221 residues: Ribosomal RNA small subunit methyltransferase G (221 aa).

Residues glycine 85, phenylalanine 90, 136–137 (AE), and arginine 149 contribute to the S-adenosyl-L-methionine site.

The protein belongs to the methyltransferase superfamily. RNA methyltransferase RsmG family.

It is found in the cytoplasm. Specifically methylates the N7 position of a guanine in 16S rRNA. The chain is Ribosomal RNA small subunit methyltransferase G from Porphyromonas gingivalis (strain ATCC BAA-308 / W83).